Here is a 731-residue protein sequence, read N- to C-terminus: MMRDSPSIQGTLDAATQHALLAGRHADPFSVLGPHQAGAHTVVRVLAPGARTVMAVLPGGQRTPLLPMQPGLFENTVPGLQPGAPAAYRLCIEWEGGIQHTADPYAFGPVLDTAQLDHCAAGGWRYLAGLLGAHAASVDGCAGTRFALWAPNARRVAVVGDFNGWDGRRHAMRLRYPAGVWELFLPDVGPGARYKFQVLGADGHTVLKADPLARQAEAPPATASIVPDERPFAWTDEAWMEQRAARQRCDAPISIYEVHAGSWFDDAGAPRWQSLAARLPEYARSLGFTHIELLPVMAHPFGGSWGYQPLGLFAPAAAHGAPADFAHFVDRCHEAGLGVILDWVPAHFPDDAHGLARLDGTPLYEHADPHEGRHPDWNTLIYNYGRREVRAFLIASAIHWLRHYHVDGLRVDAVASMLYRDYSRPAGQWIPNRHGGRENLEAIDFLRELNAAVGVQCPGAITVAEESTAWPGVTAPVANGGLGFDYKWNMGWMHDTLRYMRRDPIHRRHHHHDLSFGMVYAYAERFVLPLSHDEVVHGKGSLLGKMPGERAAQLAQLRLYYAFMWAHPGKKLLFMGGEFGQQGEWNHDAMLQWSLLDDPAHRGLQRLVADLNHVYATLPELHCRDADPSGFAWIVGDDADNSVLAFARVDASHCLVAVCNFTPVPRPGYRFGVPHAGDWRVRVDTGATRYGGAGGGPPICLRSEPIPAHGHPQSLVLDLPGFTALYLRHSE.

The Nucleophile role is filled by Asp412. Residue Glu465 is the Proton donor of the active site.

Belongs to the glycosyl hydrolase 13 family. GlgB subfamily. Monomer.

The enzyme catalyses Transfers a segment of a (1-&gt;4)-alpha-D-glucan chain to a primary hydroxy group in a similar glucan chain.. It participates in glycan biosynthesis; glycogen biosynthesis. Its function is as follows. Catalyzes the formation of the alpha-1,6-glucosidic linkages in glycogen by scission of a 1,4-alpha-linked oligosaccharide from growing alpha-1,4-glucan chains and the subsequent attachment of the oligosaccharide to the alpha-1,6 position. The protein is 1,4-alpha-glucan branching enzyme GlgB of Bordetella parapertussis (strain 12822 / ATCC BAA-587 / NCTC 13253).